We begin with the raw amino-acid sequence, 352 residues long: Sodium-lithium/proton antiporter (352 aa).

8 consecutive transmembrane segments (helical) span residues 11 to 31 (ILLL…PVSV), 32 to 52 (PLII…WMQF), 61 to 81 (AVTI…TYAV), 159 to 179 (IPEY…FMLE), 216 to 236 (AQFL…FWIT), 241 to 261 (IVMS…SIVI), 271 to 291 (IVGD…LLAI), and 317 to 337 (IGLQ…VIAF).

This sequence belongs to the autoinducer-2 exporter (AI-2E) (TC 2.A.86) family.

It is found in the cell membrane. Functionally, catalyzes the pH-dependent efflux of sodium and lithium in exchange for external protons. The sequence is that of Sodium-lithium/proton antiporter from Halobacillus andaensis.